Consider the following 88-residue polypeptide: Small ribosomal subunit protein uS17 (88 aa).

Belongs to the universal ribosomal protein uS17 family. As to quaternary structure, part of the 30S ribosomal subunit.

Its function is as follows. One of the primary rRNA binding proteins, it binds specifically to the 5'-end of 16S ribosomal RNA. This is Small ribosomal subunit protein uS17 from Prochlorococcus marinus (strain SARG / CCMP1375 / SS120).